Consider the following 382-residue polypeptide: Enoyl-[acyl-carrier-protein] reductase, mitochondrial (382 aa).

The transit peptide at 1–17 (MSSFLSKRFLSFSQRAM) directs the protein to the mitochondrion. The active-site Proton donor is the Tyr77. Residues Asn159, 187–190 (TSSV), 210–212 (RDR), 285–288 (YGGM), 310–312 (FWV), and Lys375 each bind NADP(+).

Belongs to the zinc-containing alcohol dehydrogenase family. Quinone oxidoreductase subfamily. Homodimer.

Its subcellular location is the mitochondrion matrix. The catalysed reaction is a 2,3-saturated acyl-[ACP] + NADP(+) = a (2E)-enoyl-[ACP] + NADPH + H(+). In terms of biological role, catalyzes the NADPH-dependent reduction of trans-2-enoyl thioesters in mitochondrial fatty acid synthesis (fatty acid synthesis type II). Fatty acid chain elongation in mitochondria uses acyl carrier protein (ACP) as an acyl group carrier, but the enzyme accepts both ACP and CoA thioesters as substrates in vitro. Required for respiration and the maintenance of the mitochondrial compartment. The protein is Enoyl-[acyl-carrier-protein] reductase, mitochondrial (ETR1) of Kluyveromyces lactis (strain ATCC 8585 / CBS 2359 / DSM 70799 / NBRC 1267 / NRRL Y-1140 / WM37) (Yeast).